The chain runs to 712 residues: BTB/POZ domain-containing protein 18 (712 aa).

The BTB domain maps to 34–102; the sequence is CDVLLQAEGE…LYTSEMEVSQ (69 aa). Disordered regions lie at residues 157–176, 212–355, and 374–410; these read VTPSHHPHTPLPTNQTPCPL, RACP…EGQV, and ETPLKNTQDSPQIPDPGGDFQEPSGTQPFSSNEQEMS. The span at 218 to 228 shows a compositional bias: polar residues; it reads QEKNSSPSSHS. A compositionally biased stretch (basic and acidic residues) spans 229–238; it reads QEPRENKNDT. Residues 277–288 are compositionally biased toward low complexity; the sequence is SKPSSILSGSSS. Residues 303–313 are compositionally biased toward basic and acidic residues; sequence VNKETPEDKPK. Over residues 396–410 the composition is skewed to polar residues; that stretch reads PSGTQPFSSNEQEMS. Phosphoserine occurs at positions 420, 671, and 672. 2 disordered regions span residues 653–676 and 691–712; these read KAGKEVSGHSELLGSLPASSEEEE and TTVPSVWPDPSSESETEVDILT. The segment covering 702–712 has biased composition (acidic residues); that stretch reads SESETEVDILT.

The protein localises to the nucleus. Its function is as follows. Specifically required during spermatogenesis to promote expression of piRNA precursors. The piRNA metabolic process mediates the repression of transposable elements during meiosis by forming complexes composed of piRNAs and Piwi proteins and governs the methylation and subsequent repression of transposons, which is essential for the germline integrity. Acts by facilitating transcription elongation at piRNA loci during pachytene. The sequence is that of BTB/POZ domain-containing protein 18 from Homo sapiens (Human).